Here is a 75-residue protein sequence, read N- to C-terminus: Large ribosomal subunit protein bL31 (75 aa).

Zn(2+) contacts are provided by cysteine 16, cysteine 18, cysteine 36, and cysteine 39.

Belongs to the bacterial ribosomal protein bL31 family. Type A subfamily. Part of the 50S ribosomal subunit. Zn(2+) is required as a cofactor.

Functionally, binds the 23S rRNA. The polypeptide is Large ribosomal subunit protein bL31 (Desulforapulum autotrophicum (strain ATCC 43914 / DSM 3382 / VKM B-1955 / HRM2) (Desulfobacterium autotrophicum)).